The primary structure comprises 240 residues: uncharacterized protein (240 aa).

The tract at residues 216–240 (MKQSKNKPRIRQAVGATRQCRKPQA) is disordered.

This is an uncharacterized protein from Escherichia coli (strain K12).